The sequence spans 482 residues: ATP synthase subunit beta, chloroplastic (482 aa).

162–169 (GGAGVGKT) is a binding site for ATP.

The protein belongs to the ATPase alpha/beta chains family. F-type ATPases have 2 components, CF(1) - the catalytic core - and CF(0) - the membrane proton channel. CF(1) has five subunits: alpha(3), beta(3), gamma(1), delta(1), epsilon(1). CF(0) has four main subunits: a(1), b(1), b'(1) and c(9-12).

It is found in the plastid. Its subcellular location is the chloroplast thylakoid membrane. It carries out the reaction ATP + H2O + 4 H(+)(in) = ADP + phosphate + 5 H(+)(out). Its function is as follows. Produces ATP from ADP in the presence of a proton gradient across the membrane. The catalytic sites are hosted primarily by the beta subunits. The polypeptide is ATP synthase subunit beta, chloroplastic (Pleurastrum terricola (Filamentous green alga)).